A 436-amino-acid polypeptide reads, in one-letter code: tRNA-2-methylthio-N(6)-dimethylallyladenosine synthase (436 aa).

The 116-residue stretch at 5–120 folds into the MTTase N-terminal domain; sequence KKLFIQTLGC…IKDVVDVKGA (116 aa). [4Fe-4S] cluster contacts are provided by Cys-14, Cys-51, Cys-83, Cys-152, Cys-156, and Cys-159. A Radical SAM core domain is found at 138 to 372; it reads KTNKYRASVN…IELHKRYLEE (235 aa). One can recognise a TRAM domain in the interval 375-436; sequence PKLIGETLNI…RTSLKGEVVN (62 aa).

Belongs to the methylthiotransferase family. MiaB subfamily. As to quaternary structure, monomer. [4Fe-4S] cluster serves as cofactor.

It localises to the cytoplasm. The enzyme catalyses N(6)-dimethylallyladenosine(37) in tRNA + (sulfur carrier)-SH + AH2 + 2 S-adenosyl-L-methionine = 2-methylsulfanyl-N(6)-dimethylallyladenosine(37) in tRNA + (sulfur carrier)-H + 5'-deoxyadenosine + L-methionine + A + S-adenosyl-L-homocysteine + 2 H(+). Functionally, catalyzes the methylthiolation of N6-(dimethylallyl)adenosine (i(6)A), leading to the formation of 2-methylthio-N6-(dimethylallyl)adenosine (ms(2)i(6)A) at position 37 in tRNAs that read codons beginning with uridine. The polypeptide is tRNA-2-methylthio-N(6)-dimethylallyladenosine synthase (Aliarcobacter butzleri (strain RM4018) (Arcobacter butzleri)).